A 178-amino-acid chain; its full sequence is Translation initiation factor IF-3 (178 aa).

Residues 1–20 form a disordered region; that stretch reads MRRPFRATPVQKDGPRSNRD.

It belongs to the IF-3 family. Monomer.

The protein resides in the cytoplasm. Its function is as follows. IF-3 binds to the 30S ribosomal subunit and shifts the equilibrium between 70S ribosomes and their 50S and 30S subunits in favor of the free subunits, thus enhancing the availability of 30S subunits on which protein synthesis initiation begins. The polypeptide is Translation initiation factor IF-3 (Brucella anthropi (strain ATCC 49188 / DSM 6882 / CCUG 24695 / JCM 21032 / LMG 3331 / NBRC 15819 / NCTC 12168 / Alc 37) (Ochrobactrum anthropi)).